An 859-amino-acid chain; its full sequence is Transforming growth factor-beta receptor-associated protein 1 (859 aa).

The CNH domain maps to 24 to 297 (RGLLECVECC…HILQDFEGRV (274 aa)). One copy of the CHCR repeat lies at 563–727 (KRPLDEQQSG…LLAVYLGPGP (165 aa)).

This sequence belongs to the TRAP1 family. As to quaternary structure, interacts with TGFBR2 and ACVR2B; in the absence of ligand stimulation. Interacts with TGFBR1, ACVRL1, BMPR1A and ACVR1B; in the absence of ligand stimulation and to a less extent. Interacts with SMAD4; the interaction seems to be mutually exclusive with the interaction of SMAD4 and phosphorylated SMAD2. May interact with ALOX5. Interacts with RAB5C. Interacts with VPS8, VPS11 and VPS16. Component of the putative class C core vacuole/endosome tethering (CORVET) complex; the core of which composed of the class C Vps proteins VPS11, VPS16, VPS18 and VPS33A, is associated with VPS8 and TGFBRAP1.

It is found in the cytoplasm. The protein localises to the early endosome. Functionally, plays a role in the TGF-beta/activin signaling pathway. It associates with inactive heteromeric TGF-beta and activin receptor complexes, mainly through the type II receptor, and is released upon activation of signaling. May recruit SMAD4 to the vicinity of the receptor complex and facilitate its interaction with receptor-regulated Smads, such as SMAD2. Plays a role in vesicle-mediated protein trafficking of the endocytic membrane transport pathway. Believed to act as a component of the putative CORVET endosomal tethering complexes which is proposed to be involved in the Rab5-to-Rab7 endosome conversion probably implicating MON1A/B, and via binding SNAREs and SNARE complexes to mediate tethering and docking events during SNARE-mediated membrane fusion. The CORVET complex is proposed to function as a Rab5 effector to mediate early endosome fusion probably in specific endosome subpopulations. Functions predominantly in APPL1-containing endosomes and in degradative but not recycling trafficking of endocytosed cargo. The sequence is that of Transforming growth factor-beta receptor-associated protein 1 (TGFBRAP1) from Bos taurus (Bovine).